A 502-amino-acid chain; its full sequence is Neuronal acetylcholine receptor subunit alpha-7 (502 aa).

The N-terminal stretch at 1 to 22 (MCGGRGGIWLALAAALLHVSLQ) is a signal peptide. The Extracellular portion of the chain corresponds to 23–233 (GEFQRRLYKE…VTMRRRTLYY (211 aa)). The Ca(2+) site is built by R42 and V44. N-linked (GlcNAc...) asparagine glycans are attached at residues N46, N90, and N133. A disulfide bridge links C150 with C164. Residues S172 and Y210 each contribute to the Ca(2+) site. The cysteines at positions 212 and 213 are disulfide-linked. A run of 3 helical transmembrane segments spans residues 234–254 (GLNL…VFLL), 262–282 (ISLG…VAEI), and 295–315 (QYFA…VIVL). The interval 260 to 267 (EKISLGIT) is essential for TMEM35A/NACHO-mediated proper subunit assembly and trafficking to cell membrane. The Cytoplasmic portion of the chain corresponds to 316-469 (RYHHHDPDGG…WKFAACVVDR (154 aa)). The chain crosses the membrane as a helical span at residues 470–490 (LCLMAFSVFTIICTIGILMSA).

The protein belongs to the ligand-gated ion channel (TC 1.A.9) family. Acetylcholine receptor (TC 1.A.9.1) subfamily. Alpha-7/CHRNA7 sub-subfamily. As to quaternary structure, homopentamer. Can also form heteropentamers with CHRNB2, mainly found in basal forebrain cholinergic neurons. Interacts with RIC3; which is required for proper folding and assembly. Interacts with LYPD6. Interacts with CANX. Glycosylations at Asn-46, Asn-90 and Asn-133 are essential for TMEM35A/NACHO-mediated proper subunit assembly and trafficking to the cell membrane. As to expression, expressed in neurons. Expressed in umbrella cells of urothelium (at protein level).

Its subcellular location is the postsynaptic cell membrane. The protein resides in the cell membrane. The catalysed reaction is Ca(2+)(in) = Ca(2+)(out). It catalyses the reaction K(+)(in) = K(+)(out). It carries out the reaction Na(+)(in) = Na(+)(out). The enzyme catalyses choline(out) = choline(in). The catalysed reaction is NH4(+)(in) = NH4(+)(out). It catalyses the reaction L-arginine(in) = L-arginine(out). It carries out the reaction guanidine(out) = guanidine(in). Its activity is regulated as follows. Activated by a myriad of ligands such as acetylcholine, cytisine, nicotine, choline and epibatidine. Oligomeric amyloid-beta protein 42 activates specifially CHRNA7:CHRNB2 nAchRs. Activity is modulated by positive allosteric modulators (PAMs), such as flavonoids, with a wide range of chemical diversity, pharmacological sensitivity and efficacy. AChR activity is inhibited by the antagonists alpha-conotoxons RgIA, ImI and ImII, small disulfide-constrained peptides from cone snails. Alpha-conotoxin PnIC selectively inhibits CHRNA7:CHRNB2 over CHRNA7 homopentamer. In terms of biological role, component of neuronal acetylcholine receptors (nAChRs) that function as pentameric, ligand-gated cation channels with high calcium permeability among other activities. nAChRs are excitatory neurotrasnmitter receptors formed by a collection of nAChR subunits known to mediate synaptic transmission in the nervous system and the neuromuscular junction. Each nAchR subunit confers differential attributes to channel properties, including activation, deactivation and desensitization kinetics, pH sensitivity, cation permeability, and binding to allosteric modulators. CHRNA7 forms homopentameric neuronal acetylcholine receptors abundantly expressed in the central nervous system, characterized by fast desensitization and high calcium permeability. Also forms heteropentamers with CHRNB2, mainly expressed in basal forebrain cholinergic neurons. Involved in the modulation of calcium-dependent signaling pathways and influences the release of neurotransmitters, including dopamine, glutamate and GABA. Also expressed in non-neuronal cells such as immune cells like lymphocytes, monocytes and macrophages. In T cells, activation induces metabotropic signaling that results in an increase of intracellular Ca2+ concentrations, independent of ionotropic receptor functions. In macrophages, required for acetylcholine-mediated inhibition of TNF and other inflammatory cytokine release. Once activated by acetylcholine, nicotine or other agonists, selectively inhibits production of pro-inflammatory cytokines while leaving anti-inflammatory cytokines undisturbed. Stimulates the cholinergic anti-inflammatory pathway, controlling inflammation by inhibiting NFKB nuclear translocation and activating the JAK2-STAT3 pathway, independently of ion channel activity. Also expressed in the urothelium where it modulates reflex bladder activity by increasing intracellular calcium through internal stores and decreasing basal ATP release. The polypeptide is Neuronal acetylcholine receptor subunit alpha-7 (Chrna7) (Rattus norvegicus (Rat)).